Here is a 464-residue protein sequence, read N- to C-terminus: ATP synthase subunit beta (464 aa).

152–159 contributes to the ATP binding site; the sequence is GGAGVGKT.

This sequence belongs to the ATPase alpha/beta chains family. In terms of assembly, F-type ATPases have 2 components, CF(1) - the catalytic core - and CF(0) - the membrane proton channel. CF(1) has five subunits: alpha(3), beta(3), gamma(1), delta(1), epsilon(1). CF(0) has three main subunits: a(1), b(2) and c(9-12). The alpha and beta chains form an alternating ring which encloses part of the gamma chain. CF(1) is attached to CF(0) by a central stalk formed by the gamma and epsilon chains, while a peripheral stalk is formed by the delta and b chains.

It is found in the cell membrane. It carries out the reaction ATP + H2O + 4 H(+)(in) = ADP + phosphate + 5 H(+)(out). In terms of biological role, produces ATP from ADP in the presence of a proton gradient across the membrane. The catalytic sites are hosted primarily by the beta subunits. This Ureaplasma parvum serovar 3 (strain ATCC 27815 / 27 / NCTC 11736) protein is ATP synthase subunit beta.